A 490-amino-acid chain; its full sequence is Betaine aldehyde dehydrogenase (490 aa).

3 residues coordinate K(+): Thr26, Ile27, and Asp93. 150 to 152 serves as a coordination point for NAD(+); it reads GAW. The Charge relay system role is filled by Lys162. 176–179 is a binding site for NAD(+); it reads KPSE. Val180 serves as a coordination point for K(+). 230 to 233 serves as a coordination point for NAD(+); that stretch reads GVAS. Leu246 lines the K(+) pocket. The Proton acceptor role is filled by Glu252. Gly254, Cys286, and Glu387 together coordinate NAD(+). The active-site Nucleophile is Cys286. Cys286 is modified (cysteine sulfenic acid (-SOH)). K(+) is bound by residues Lys457 and Gly460. Glu464 serves as the catalytic Charge relay system.

Belongs to the aldehyde dehydrogenase family. As to quaternary structure, dimer of dimers. K(+) is required as a cofactor.

The enzyme catalyses betaine aldehyde + NAD(+) + H2O = glycine betaine + NADH + 2 H(+). Its pathway is amine and polyamine biosynthesis; betaine biosynthesis via choline pathway; betaine from betaine aldehyde: step 1/1. Involved in the biosynthesis of the osmoprotectant glycine betaine. Catalyzes the irreversible oxidation of betaine aldehyde to the corresponding acid. The chain is Betaine aldehyde dehydrogenase from Escherichia coli O45:K1 (strain S88 / ExPEC).